The sequence spans 103 residues: Pyrimidine/purine nucleoside phosphorylase (103 aa).

The protein belongs to the nucleoside phosphorylase PpnP family.

The enzyme catalyses a purine D-ribonucleoside + phosphate = a purine nucleobase + alpha-D-ribose 1-phosphate. It carries out the reaction adenosine + phosphate = alpha-D-ribose 1-phosphate + adenine. The catalysed reaction is cytidine + phosphate = cytosine + alpha-D-ribose 1-phosphate. It catalyses the reaction guanosine + phosphate = alpha-D-ribose 1-phosphate + guanine. The enzyme catalyses inosine + phosphate = alpha-D-ribose 1-phosphate + hypoxanthine. It carries out the reaction thymidine + phosphate = 2-deoxy-alpha-D-ribose 1-phosphate + thymine. The catalysed reaction is uridine + phosphate = alpha-D-ribose 1-phosphate + uracil. It catalyses the reaction xanthosine + phosphate = alpha-D-ribose 1-phosphate + xanthine. Catalyzes the phosphorolysis of diverse nucleosides, yielding D-ribose 1-phosphate and the respective free bases. Can use uridine, adenosine, guanosine, cytidine, thymidine, inosine and xanthosine as substrates. Also catalyzes the reverse reactions. The protein is Pyrimidine/purine nucleoside phosphorylase of Sulfurovum sp. (strain NBC37-1).